The sequence spans 382 residues: MKNAVHFGAGNIGRGFIGKLLADANVSVTFADVDAPLVDQLSHRQEYKVKVVGSECQIDTVTHVTAVNSASEEVIDRIVQTDLVTTAVGPNVLDIIAKTIAQGIAKRFAAGNLAPLNIIACENMVRGTTHLKGEVYKHLDASLHAQVDELVGFVDSAVDRIVPPAEAANDDPLEVTVESFSEWIVDEQQFKGEVPSIAGMEKTHNLMAFVERKLFTLNTGHCITAYLGCLQGHRTIREAIENPAICDQVKQAMMESGEVLIRRYGFDREMHQAYIEKILARFANPFLVDEVDRVGRQPIRKLGMNDRLIKPLLGTIEFGTANQHLLKGIAAALKYQNDSDPQAVELQRSLQQVGVKKTLAKYTSLAEDSVEVAKIETLYNQL.

Residue 4–15 (AVHFGAGNIGRG) participates in NAD(+) binding.

It belongs to the mannitol dehydrogenase family.

The enzyme catalyses D-mannitol 1-phosphate + NAD(+) = beta-D-fructose 6-phosphate + NADH + H(+). The chain is Mannitol-1-phosphate 5-dehydrogenase from Vibrio vulnificus (strain YJ016).